A 403-amino-acid chain; its full sequence is Accessory Sec system protein translocase subunit SecY2 (403 aa).

Transmembrane regions (helical) follow at residues 17–37, 63–83, 105–125, 131–151, 157–177, 186–206, 240–260, 276–296, 339–359, and 366–386; these read MLYT…SIVS, LNIF…LMLI, ILTL…YVSK, DNIY…VWLA, YGIA…MMHQ, HIVI…LLFI, ITLM…HFIL, FDSP…GYFL, WFGS…TLFV, and IYFS…AETI.

It belongs to the SecY/SEC61-alpha family. SecY2 subfamily. In terms of assembly, component of the accessory SecA2/SecY2 protein translocase complex required to export cell wall proteins. May form heterotrimers with SecE and SecG subunits.

It is found in the cell membrane. Functionally, part of the accessory SecA2/SecY2 system specifically required for export of possible cell wall proteins. The central subunit of a protein translocation channel. The chain is Accessory Sec system protein translocase subunit SecY2 from Staphylococcus aureus (strain N315).